We begin with the raw amino-acid sequence, 308 residues long: Adult enhancer factor 1 (308 aa).

Disordered regions lie at residues 50-94 (AHMA…PLPF) and 123-143 (QAAA…THLT). Over residues 56–76 (QQQQQQQQQQQQQHHQQQQQQ) the composition is skewed to low complexity. Residues 81–90 (PSVPPPPTEL) show a composition bias toward pro residues. 4 C2H2-type zinc fingers span residues 184-206 (FHCT…VKIH), 212-234 (YKCN…LKIH), 240-262 (YNCN…VKIH), and 268-290 (FECV…IKIH).

In terms of tissue distribution, found in all tissues examined including the ovary and the fat body.

Its subcellular location is the nucleus. Functionally, transcriptional repressor that binds specifically to fat body-specific enhancers, namely the adult ADH enhancer (AAE) and the enhancer that controls yolk protein gene expression. The protein is Adult enhancer factor 1 (Aef1) of Drosophila melanogaster (Fruit fly).